Reading from the N-terminus, the 188-residue chain is Probable manganese efflux pump MntP (188 aa).

5 helical membrane-spanning segments follow: residues 3-23 (ITAT…ASIG), 66-86 (LEWN…RMII), 106-128 (WLLV…GLAF), 143-163 (ATLI…SIIG), and 168-188 (ILGG…HFHG).

It belongs to the MntP (TC 9.B.29) family.

It is found in the cell inner membrane. Functionally, probably functions as a manganese efflux pump. The sequence is that of Probable manganese efflux pump MntP from Escherichia coli O139:H28 (strain E24377A / ETEC).